The following is a 500-amino-acid chain: Trehalose-6-phosphate synthase (500 aa).

Arg28 serves as a coordination point for D-glucose 6-phosphate. A UDP-alpha-D-glucose-binding site is contributed by 48 to 49; that stretch reads GG. The D-glucose 6-phosphate site is built by Tyr108 and Asp162. Positions 304 and 309 each coordinate UDP-alpha-D-glucose. Arg342 contacts D-glucose 6-phosphate. 407-411 is a binding site for UDP-alpha-D-glucose; sequence LVAKE.

It belongs to the glycosyltransferase 20 family. Homotetramer.

The enzyme catalyses ADP-alpha-D-glucose + D-glucose 6-phosphate = alpha,alpha-trehalose 6-phosphate + ADP + H(+). It catalyses the reaction CDP-alpha-D-glucose + D-glucose 6-phosphate = alpha,alpha-trehalose 6-phosphate + CDP + H(+). The catalysed reaction is GDP-alpha-D-glucose + D-glucose 6-phosphate = alpha,alpha-trehalose 6-phosphate + GDP + H(+). It carries out the reaction TDP-alpha-D-glucose + D-glucose 6-phosphate = 5-methyl-UDP + alpha,alpha-trehalose 6-phosphate + H(+). The enzyme catalyses D-glucose 6-phosphate + UDP-alpha-D-glucose = alpha,alpha-trehalose 6-phosphate + UDP + H(+). It functions in the pathway glycan biosynthesis; trehalose biosynthesis. In terms of biological role, probably involved in the osmoprotection via the biosynthesis of trehalose and in the production of glycogen and alpha-glucan via the TreS-Pep2 branch involved in the biosynthesis of maltose-1-phosphate (M1P). Catalyzes the transfer of glucose from UDP-glucose (UDP-Glc) to D-glucose 6-phosphate (Glc-6-P) to form trehalose-6-phosphate. Probably also able to use ADP-Glc, CDP-Glc, GDP-Glc and TDP-Glc as glucosyl donors. The polypeptide is Trehalose-6-phosphate synthase (Mycobacterium bovis (strain ATCC BAA-935 / AF2122/97)).